Consider the following 178-residue polypeptide: Large ribosomal subunit protein uL6 (178 aa).

The protein belongs to the universal ribosomal protein uL6 family. In terms of assembly, part of the 50S ribosomal subunit.

Functionally, this protein binds to the 23S rRNA, and is important in its secondary structure. It is located near the subunit interface in the base of the L7/L12 stalk, and near the tRNA binding site of the peptidyltransferase center. This chain is Large ribosomal subunit protein uL6, found in Streptococcus gordonii (strain Challis / ATCC 35105 / BCRC 15272 / CH1 / DL1 / V288).